The primary structure comprises 659 residues: A-type ATP synthase subunit I (659 aa).

A run of 8 helical transmembrane segments spans residues 376–396 (FFFG…VISA), 415–435 (IMLW…SYCG), 460–480 (VMAL…GFIV), 489–509 (AAIL…LFAL), 513–533 (LGIP…LFVV), 542–562 (MAVL…LSYA), 566–586 (ALAL…NMVW), and 590–610 (IGPI…GHIF).

Belongs to the V-ATPase 116 kDa subunit family. In terms of assembly, has multiple subunits with at least A(3), B(3), C, D, E, F, H, I and proteolipid K(x).

The protein resides in the cell membrane. Component of the A-type ATP synthase that produces ATP from ADP in the presence of a proton gradient across the membrane. The protein is A-type ATP synthase subunit I of Pyrococcus abyssi (strain GE5 / Orsay).